The chain runs to 40 residues: Photosystem II reaction center protein J (40 aa).

The helical transmembrane segment at 8–28 threads the bilayer; the sequence is IPLWLVGTVTGIPVIGLIGVF.

This sequence belongs to the PsbJ family. As to quaternary structure, PSII is composed of 1 copy each of membrane proteins PsbA, PsbB, PsbC, PsbD, PsbE, PsbF, PsbH, PsbI, PsbJ, PsbK, PsbL, PsbM, PsbT, PsbX, PsbY, PsbZ, Psb30/Ycf12, at least 3 peripheral proteins of the oxygen-evolving complex and a large number of cofactors. It forms dimeric complexes.

The protein localises to the plastid. It localises to the chloroplast thylakoid membrane. Its function is as follows. One of the components of the core complex of photosystem II (PSII). PSII is a light-driven water:plastoquinone oxidoreductase that uses light energy to abstract electrons from H(2)O, generating O(2) and a proton gradient subsequently used for ATP formation. It consists of a core antenna complex that captures photons, and an electron transfer chain that converts photonic excitation into a charge separation. This is Photosystem II reaction center protein J from Musa acuminata (Banana).